We begin with the raw amino-acid sequence, 93 residues long: uncharacterized protein (93 aa).

The chain crosses the membrane as a helical span at residues 20 to 40 (VYIYLCFSLMTIALICYLIHI). N-linked (GlcNAc...) asparagine; by host glycosylation is present at N78.

The protein belongs to the asfivirus KP93L family.

It localises to the host membrane. This is an uncharacterized protein from Ornithodoros (relapsing fever ticks).